The following is a 93-amino-acid chain: Phosphoribosyl-ATP pyrophosphatase (93 aa).

The protein belongs to the PRA-PH family.

It localises to the cytoplasm. The enzyme catalyses 1-(5-phospho-beta-D-ribosyl)-ATP + H2O = 1-(5-phospho-beta-D-ribosyl)-5'-AMP + diphosphate + H(+). The protein operates within amino-acid biosynthesis; L-histidine biosynthesis; L-histidine from 5-phospho-alpha-D-ribose 1-diphosphate: step 2/9. The protein is Phosphoribosyl-ATP pyrophosphatase of Mycolicibacterium vanbaalenii (strain DSM 7251 / JCM 13017 / BCRC 16820 / KCTC 9966 / NRRL B-24157 / PYR-1) (Mycobacterium vanbaalenii).